Reading from the N-terminus, the 217-residue chain is Ras-related protein RABA1f (217 aa).

Residue 20-27 (GDSGVGKS) coordinates GTP. Residues 42–50 (SKSTIGVEF) carry the Effector region motif. Residues 68 to 72 (DTAGQ), 126 to 129 (NKAD), and 156 to 157 (SA) contribute to the GTP site. 2 S-geranylgeranyl cysteine lipidation sites follow: C214 and C215.

This sequence belongs to the small GTPase superfamily. Rab family.

Its subcellular location is the cell membrane. Intracellular vesicle trafficking and protein transport. In Arabidopsis thaliana (Mouse-ear cress), this protein is Ras-related protein RABA1f (RABA1F).